A 345-amino-acid polypeptide reads, in one-letter code: Phosphate acyltransferase (345 aa).

It belongs to the PlsX family. As to quaternary structure, homodimer. Probably interacts with PlsY.

It is found in the cytoplasm. The catalysed reaction is a fatty acyl-[ACP] + phosphate = an acyl phosphate + holo-[ACP]. The protein operates within lipid metabolism; phospholipid metabolism. In terms of biological role, catalyzes the reversible formation of acyl-phosphate (acyl-PO(4)) from acyl-[acyl-carrier-protein] (acyl-ACP). This enzyme utilizes acyl-ACP as fatty acyl donor, but not acyl-CoA. The chain is Phosphate acyltransferase from Trichlorobacter lovleyi (strain ATCC BAA-1151 / DSM 17278 / SZ) (Geobacter lovleyi).